We begin with the raw amino-acid sequence, 588 residues long: L-fucose isomerase (588 aa).

Residues glutamate 335 and aspartate 359 each act as proton acceptor in the active site. Residues glutamate 335, aspartate 359, and histidine 525 each coordinate Mn(2+).

The protein belongs to the L-fucose isomerase family. Requires Mn(2+) as cofactor.

It is found in the cytoplasm. It carries out the reaction L-fucose = L-fuculose. Its pathway is carbohydrate degradation; L-fucose degradation; L-lactaldehyde and glycerone phosphate from L-fucose: step 1/3. Converts the aldose L-fucose into the corresponding ketose L-fuculose. The chain is L-fucose isomerase from Streptococcus pneumoniae serotype 4 (strain ATCC BAA-334 / TIGR4).